We begin with the raw amino-acid sequence, 306 residues long: Homoserine O-acetyltransferase (306 aa).

Catalysis depends on cysteine 142, which acts as the Acyl-thioester intermediate. Residues lysine 163 and serine 192 each contribute to the substrate site. Histidine 235 acts as the Proton acceptor in catalysis. Residue glutamate 237 is part of the active site. Arginine 249 is a binding site for substrate.

It belongs to the MetA family.

Its subcellular location is the cytoplasm. It catalyses the reaction L-homoserine + acetyl-CoA = O-acetyl-L-homoserine + CoA. Its pathway is amino-acid biosynthesis; L-methionine biosynthesis via de novo pathway; O-acetyl-L-homoserine from L-homoserine: step 1/1. Its function is as follows. Transfers an acetyl group from acetyl-CoA to L-homoserine, forming acetyl-L-homoserine. In Brucella melitensis biotype 1 (strain ATCC 23456 / CCUG 17765 / NCTC 10094 / 16M), this protein is Homoserine O-acetyltransferase.